Here is a 267-residue protein sequence, read N- to C-terminus: 3-methyl-2-oxobutanoate hydroxymethyltransferase (267 aa).

The Mg(2+) site is built by Asp46 and Asp85. 3-methyl-2-oxobutanoate is bound by residues 46-47, Asp85, and Lys115; that span reads DS. Glu117 contacts Mg(2+). The active-site Proton acceptor is Glu184.

Belongs to the PanB family. Homodecamer; pentamer of dimers. The cofactor is Mg(2+).

The protein localises to the cytoplasm. It carries out the reaction 3-methyl-2-oxobutanoate + (6R)-5,10-methylene-5,6,7,8-tetrahydrofolate + H2O = 2-dehydropantoate + (6S)-5,6,7,8-tetrahydrofolate. Its pathway is cofactor biosynthesis; (R)-pantothenate biosynthesis; (R)-pantoate from 3-methyl-2-oxobutanoate: step 1/2. Functionally, catalyzes the reversible reaction in which hydroxymethyl group from 5,10-methylenetetrahydrofolate is transferred onto alpha-ketoisovalerate to form ketopantoate. In Geobacter metallireducens (strain ATCC 53774 / DSM 7210 / GS-15), this protein is 3-methyl-2-oxobutanoate hydroxymethyltransferase.